The chain runs to 239 residues: Putative transcriptional regulator of 2-aminoethylphosphonate degradation operons (239 aa).

One can recognise an HTH gntR-type domain in the interval I8–E76. Residues E36–A55 constitute a DNA-binding region (H-T-H motif).

This is Putative transcriptional regulator of 2-aminoethylphosphonate degradation operons (phnR) from Salmonella paratyphi A (strain ATCC 9150 / SARB42).